We begin with the raw amino-acid sequence, 426 residues long: Histidine--tRNA ligase (426 aa).

Belongs to the class-II aminoacyl-tRNA synthetase family.

It is found in the cytoplasm. The catalysed reaction is tRNA(His) + L-histidine + ATP = L-histidyl-tRNA(His) + AMP + diphosphate + H(+). The polypeptide is Histidine--tRNA ligase (Sulfurisphaera tokodaii (strain DSM 16993 / JCM 10545 / NBRC 100140 / 7) (Sulfolobus tokodaii)).